The following is a 105-amino-acid chain: Putative neurotoxin 10 (105 aa).

The signal sequence occupies residues 1 to 21 (MTVSCSKVLLSLCLFLILLEA).

It belongs to the scolopendra neurotoxin 10 family. Contains 3 disulfide bonds. As to expression, expressed by the venom gland.

Its subcellular location is the secreted. In Scolopendra mutilans (Chinese red-headed centipede), this protein is Putative neurotoxin 10.